We begin with the raw amino-acid sequence, 296 residues long: Ethanolamine ammonia-lyase small subunit (296 aa).

2 residues coordinate adenosylcob(III)alamin: V209 and E230.

It belongs to the EutC family. The basic unit is a heterodimer which dimerizes to form tetramers. The heterotetramers trimerize; 6 large subunits form a core ring with 6 small subunits projecting outwards. It depends on adenosylcob(III)alamin as a cofactor.

It localises to the bacterial microcompartment. It carries out the reaction ethanolamine = acetaldehyde + NH4(+). The protein operates within amine and polyamine degradation; ethanolamine degradation. Catalyzes the deamination of various vicinal amino-alcohols to oxo compounds. Allows this organism to utilize ethanolamine as the sole source of nitrogen and carbon in the presence of external vitamin B12. In Lachnoclostridium phytofermentans (strain ATCC 700394 / DSM 18823 / ISDg) (Clostridium phytofermentans), this protein is Ethanolamine ammonia-lyase small subunit.